We begin with the raw amino-acid sequence, 735 residues long: Ion-translocating oxidoreductase complex subunit C (735 aa).

4Fe-4S ferredoxin-type domains lie at 368–397 and 407–436; these read MGAP…QQLY and KATA…VQYF. [4Fe-4S] cluster contacts are provided by C377, C380, C383, C387, C416, C419, C422, and C426. Residues 534 to 716 are disordered; the sequence is QARAKQAAHP…ADPRKAAVAA (183 aa).

Belongs to the 4Fe4S bacterial-type ferredoxin family. RnfC subfamily. The complex is composed of six subunits: RsxA, RsxB, RsxC, RsxD, RsxE and RsxG. The cofactor is [4Fe-4S] cluster.

The protein localises to the cell inner membrane. In terms of biological role, part of a membrane-bound complex that couples electron transfer with translocation of ions across the membrane. Required to maintain the reduced state of SoxR. The chain is Ion-translocating oxidoreductase complex subunit C from Salmonella agona (strain SL483).